Here is a 119-residue protein sequence, read N- to C-terminus: Small ribosomal subunit protein bS16 (119 aa).

Belongs to the bacterial ribosomal protein bS16 family.

The sequence is that of Small ribosomal subunit protein bS16 from Amoebophilus asiaticus (strain 5a2).